Reading from the N-terminus, the 832-residue chain is Protein translocase subunit SecA (832 aa).

ATP is bound by residues Gln87, 105 to 109, and Asp512; that span reads GEGKT.

This sequence belongs to the SecA family. As to quaternary structure, monomer and homodimer. Part of the essential Sec protein translocation apparatus which comprises SecA, SecYEG and auxiliary proteins SecDF-YajC and YidC.

It localises to the cell membrane. It is found in the cytoplasm. It catalyses the reaction ATP + H2O + cellular proteinSide 1 = ADP + phosphate + cellular proteinSide 2.. Part of the Sec protein translocase complex. Interacts with the SecYEG preprotein conducting channel. Has a central role in coupling the hydrolysis of ATP to the transfer of proteins into and across the cell membrane, serving as an ATP-driven molecular motor driving the stepwise translocation of polypeptide chains across the membrane. The chain is Protein translocase subunit SecA from Wigglesworthia glossinidia brevipalpis.